The primary structure comprises 202 residues: Small ribosomal subunit protein uS4c (202 aa).

The S4 RNA-binding domain maps to 90–153; the sequence is MRLDNIIFRL…KSQAIISKNL (64 aa).

The protein belongs to the universal ribosomal protein uS4 family. As to quaternary structure, part of the 30S ribosomal subunit. Contacts protein S5. The interaction surface between S4 and S5 is involved in control of translational fidelity.

The protein resides in the plastid. It is found in the chloroplast. Functionally, one of the primary rRNA binding proteins, it binds directly to 16S rRNA where it nucleates assembly of the body of the 30S subunit. With S5 and S12 plays an important role in translational accuracy. This Rosulabryum capillare (Capillary thread-moss) protein is Small ribosomal subunit protein uS4c (rps4).